The primary structure comprises 209 residues: MARYCGPKNRIARRFGANIFGRSRNPLLKKPHPPGQHGMQRKKKSDYGLQLEEKQKLKACYGMILEKQLVKAFKEVVHKQGSVTKMFLERFECRLDNMVYRMGFAKTIFAAQQLVAHGHVLVNGKKVDRRSFFLRPGMQVSLKEKSRKLQSVQESLENKDESSLPSYISLDKGNFKGELLMSPEQDQMEAQLPLPVDISVVCEFLSHRT.

The segment at 23 to 46 is disordered; that stretch reads SRNPLLKKPHPPGQHGMQRKKKSD. The region spanning 93-156 is the S4 RNA-binding domain; sequence CRLDNMVYRM…RKLQSVQESL (64 aa).

It belongs to the universal ribosomal protein uS4 family. In terms of assembly, part of the 30S ribosomal subunit. Contacts protein S5. The interaction surface between S4 and S5 is involved in control of translational fidelity.

One of the primary rRNA binding proteins, it binds directly to 16S rRNA where it nucleates assembly of the body of the 30S subunit. In terms of biological role, with S5 and S12 plays an important role in translational accuracy. This is Small ribosomal subunit protein uS4 from Chlamydia felis (strain Fe/C-56) (Chlamydophila felis).